A 152-amino-acid polypeptide reads, in one-letter code: Chemokine-like factor (152 aa).

The region spanning 13–133 (FCCTLKCFVK…DCALMCQKLR (121 aa)) is the MARVEL domain. The next 4 membrane-spanning stretches (helical) occupy residues 19–39 (CFVK…FIVG), 46–66 (IVIT…YTCG), 81–101 (VINS…ALIP), and 108–128 (ILGG…CALM).

The protein belongs to the chemokine-like factor family. In terms of tissue distribution, ubiquitous.

The protein resides in the membrane. May play an important role in inflammation and regeneration of skeletal muscle. Essential for embryonic development. This chain is Chemokine-like factor (Cklf), found in Mus musculus (Mouse).